Here is a 702-residue protein sequence, read N- to C-terminus: Elongation factor G (702 aa).

Positions Glu-8–Thr-290 constitute a tr-type G domain. Residues Ala-17–Thr-24, Asp-88–His-92, and Asn-142–Asp-145 contribute to the GTP site.

Belongs to the TRAFAC class translation factor GTPase superfamily. Classic translation factor GTPase family. EF-G/EF-2 subfamily.

The protein resides in the cytoplasm. Functionally, catalyzes the GTP-dependent ribosomal translocation step during translation elongation. During this step, the ribosome changes from the pre-translocational (PRE) to the post-translocational (POST) state as the newly formed A-site-bound peptidyl-tRNA and P-site-bound deacylated tRNA move to the P and E sites, respectively. Catalyzes the coordinated movement of the two tRNA molecules, the mRNA and conformational changes in the ribosome. This is Elongation factor G from Yersinia pseudotuberculosis serotype O:1b (strain IP 31758).